The following is a 408-amino-acid chain: UDP-N-acetylglucosamine--dolichyl-phosphate N-acetylglucosaminephosphotransferase (408 aa).

Over 1–10 the chain is Lumenal; the sequence is MWAFPELPMP. Residues 11–38 form a helical membrane-spanning segment; that stretch reads LLVNLIGSLMGFVATVTLIPAFRGHFIA. Topologically, residues 39 to 58 are cytoplasmic; it reads ARLCGQDLNKSSREQIPESQ. UDP-N-acetyl-alpha-D-glucosamine is bound by residues 44 to 46 and glutamate 56; that span reads QDL. Residues 59–78 form a helical membrane-spanning segment; the sequence is GVISGAVFLIILFCFIPFPF. Residues 79 to 91 lie on the Lumenal side of the membrane; it reads LNCFVEQQCKAFP. Residues 92–118 form a helical membrane-spanning segment; sequence HHEFVALIGALLAICCMIFLGFADDVL. The Cytoplasmic segment spans residues 119-121; it reads NLR. Residues 122-143 form a helical membrane-spanning segment; sequence WRHKLLLPTAASLPLLMVYFTN. Lysine 125 contributes to the dolichyl phosphate binding site. Over 144–166 the chain is Lumenal; sequence FGNTTIVVPKPLRPILGLHLDLG. A glycan (N-linked (GlcNAc...) asparagine) is linked at asparagine 146. The chain crosses the membrane as a helical span at residues 167 to 186; sequence ILYYVYMGLLAVFCTNAINI. 178-186 serves as a coordination point for dolichyl phosphate; sequence VFCTNAINI. A Mg(2+)-binding site is contributed by asparagine 185. Over 187–192 the chain is Cytoplasmic; that stretch reads LAGING. A UDP-N-acetyl-alpha-D-glucosamine-binding site is contributed by asparagine 191. The chain crosses the membrane as a helical span at residues 193–213; that stretch reads LEAGQSLVISASIIVFNLVEL. Residues 214–218 lie on the Lumenal side of the membrane; the sequence is DGDYR. Residues 219-242 traverse the membrane as a helical segment; the sequence is DDHIFSLYFMIPFFFTTLGLLYHN. The Cytoplasmic segment spans residues 243-250; it reads WYPSRVFV. The helical transmembrane segment at 251–269 threads the bilayer; the sequence is GDTFCYFAGMTFAVVGILG. Position 252 (aspartate 252) interacts with Mg(2+). Residues 270 to 271 are Lumenal-facing; the sequence is HF. The chain crosses the membrane as a helical span at residues 272 to 293; the sequence is SKTMLLFFMPQVFNFLYSLPQL. Residues 294 to 375 are Cytoplasmic-facing; sequence LHIIPCPRHR…LLLKVFGPMH (82 aa). 301–303 provides a ligand contact to UDP-N-acetyl-alpha-D-glucosamine; the sequence is RHR. The chain crosses the membrane as a helical span at residues 376–400; sequence ERNLTLLLLLLQVVGSAVTFSIRYQ. Residues 401-408 are Lumenal-facing; that stretch reads LVRLFYDV.

This sequence belongs to the glycosyltransferase 4 family. Homodimer. Mg(2+) is required as a cofactor.

The protein resides in the endoplasmic reticulum membrane. The catalysed reaction is a di-trans,poly-cis-dolichyl phosphate + UDP-N-acetyl-alpha-D-glucosamine = an N-acetyl-alpha-D-glucosaminyl-diphospho-di-trans,poly-cis-dolichol + UMP. It functions in the pathway protein modification; protein glycosylation. With respect to regulation, inhibited by natural nucleoside antibiotic tunicamycin, which acts as a structural analog and competitor of UDP-GlcNAc. Activated by Man-P-Dol. Activated by manganese. Inhibited by diumycin. Its function is as follows. UDP-N-acetylglucosamine--dolichyl-phosphate N-acetylglucosaminephosphotransferase that operates in the biosynthetic pathway of dolichol-linked oligosaccharides, the glycan precursors employed in protein asparagine (N)-glycosylation. The assembly of dolichol-linked oligosaccharides begins on the cytosolic side of the endoplasmic reticulum membrane and finishes in its lumen. The sequential addition of sugars to dolichol pyrophosphate produces dolichol-linked oligosaccharides containing fourteen sugars, including two GlcNAcs, nine mannoses and three glucoses. Once assembled, the oligosaccharide is transferred from the lipid to nascent proteins by oligosaccharyltransferases. Catalyzes the initial step of dolichol-linked oligosaccharide biosynthesis, transfering GlcNAc-1-P from cytosolic UDP-GlcNAc onto the carrier lipid dolichyl phosphate (P-dolichol), yielding GlcNAc-P-P-dolichol embedded in the cytoplasmic leaflet of the endoplasmic reticulum membrane. The polypeptide is UDP-N-acetylglucosamine--dolichyl-phosphate N-acetylglucosaminephosphotransferase (Bos taurus (Bovine)).